Consider the following 28-residue polypeptide: VGCEECPMHCKGKHAVPTCDDGVCNCNV.

3 disulfides stabilise this stretch: Cys3/Cys19, Cys6/Cys24, and Cys10/Cys26. Valine amide is present on Val28.

As to expression, expressed by the venom gland.

It localises to the secreted. Functionally, blocks voltage-gated potassium channels Kv1.1/KCNA1 (IC(50)=145 nM), Kv1.2/KCNA2 (IC(50)=2.5 nM), and Kv1.3/KCNA3 (IC(50)=15). Also inhibits calcium-activated potassium channels (KCa/KCNN). This is Potassium channel toxin alpha-KTx 9.5 from Buthus occitanus tunetanus (Common European scorpion).